An 825-amino-acid polypeptide reads, in one-letter code: Interleukin-4 receptor subunit alpha (825 aa).

Residues 1–25 form the signal peptide; sequence MGWLCSGLLFPVSCLVLLQVASSGN. At 26–232 the chain is on the extracellular side; sequence MKVLQEPTCV…NSYREPFEQH (207 aa). A disulfide bridge connects residues cysteine 34 and cysteine 44. A glycan (N-linked (GlcNAc...) asparagine) is linked at asparagine 53. Cysteine 74 and cysteine 86 are disulfide-bonded. N-linked (GlcNAc...) asparagine glycans are attached at residues asparagine 98, asparagine 128, asparagine 134, asparagine 176, and asparagine 209. Residues 125–224 form the Fibronectin type-III domain; sequence APGNLTVHTN…WSPSTKWHNS (100 aa). The WSXWS motif motif lies at 212–216; that stretch reads WSEWS. A helical transmembrane segment spans residues 233 to 256; that stretch reads LLLGVSVSCIVILAVCLLCYVSIT. Topologically, residues 257–825 are cytoplasmic; it reads KIKKEWWDQI…SVGPTYMRVS (569 aa). Residues 262-270 carry the Box 1 motif motif; sequence WWDQIPNPA. 2 disordered regions span residues 373-397 and 433-485; these read EEEE…DFQE and LPPS…LTCT. The tract at residues 437-557 is required for IRS1 activation and IL4-induced cell growth; that stretch reads GSTSAHMPWD…ETWEQILRRN (121 aa). Polar residues predominate over residues 475–485; sequence PTQSPDNLTCT. Phosphotyrosine is present on residues tyrosine 497, tyrosine 575, tyrosine 603, and tyrosine 631. Residues 558–657 form a required for IL4-induced gene expression region; the sequence is VLQHGAAAAP…VPVPLFTFGL (100 aa). A disordered region spans residues 651–703; sequence PLFTFGLDREPPRSPQSSHLPSSSPEHLGLEPGEKVEDMPKPPLPQEQATDPL. Over residues 665–677 the composition is skewed to low complexity; sequence PQSSHLPSSSPEH. Over residues 678–690 the composition is skewed to basic and acidic residues; it reads LGLEPGEKVEDMP. The short motif at 711-716 is the ITIM motif element; that stretch reads IVYSAL. The segment at 782 to 809 is disordered; sequence PSGISEKSKSSSSFHPAPGNAQSSSQTP.

It belongs to the type I cytokine receptor family. Type 4 subfamily. As to quaternary structure, the functional IL4 receptor is formed by initial binding of IL4 to IL4R. Subsequent recruitment to the complex of the common gamma chain, in immune cells, creates a type I receptor and, in non-immune cells, of IL13RA1 forms a type II receptor. IL4R can also interact with the IL13/IL13RA1 complex to form a similar type II receptor. Interacts with PIK3C3. Interacts with the SH2-containing phosphatases, PTPN6/SHIP1, PTPN11/SHIP2 and INPP5D/SHIP. Interacts with JAK1 through a Box 1-containing region; inhibited by SOCS5. Interacts with SOCS5; inhibits IL4 signaling. Interacts with JAK3. Interacts with CLM1. Interacts with IL13RA2. Post-translationally, on IL4 binding, phosphorylated on C-terminal tyrosine residues. Phosphorylation on any one of tyrosine residues, Tyr-575, Tyr-603 or Tyr-631, is required for STAT6-induced gene induction. The soluble form (sIL4R/IL4BP) can also be produced by proteolytic cleavage at the cell surface (shedding) by a metalloproteinase. As to expression, isoform 1 and isoform 2 are highly expressed in activated T-cells.

The protein resides in the cell membrane. It is found in the secreted. Its function is as follows. Receptor for both interleukin 4 and interleukin 13. Couples to the JAK1/2/3-STAT6 pathway. The IL4 response is involved in promoting Th2 differentiation. The IL4/IL13 responses are involved in regulating IgE production and, chemokine and mucus production at sites of allergic inflammation. In certain cell types, can signal through activation of insulin receptor substrates, IRS1/IRS2. Functionally, soluble IL4R (sIL4R) inhibits IL4-mediated cell proliferation and IL5 up-regulation by T-cells. This chain is Interleukin-4 receptor subunit alpha (IL4R), found in Homo sapiens (Human).